Here is a 173-residue protein sequence, read N- to C-terminus: Pathogenesis-related protein 1C (173 aa).

The N-terminal stretch at M1–A20 is a signal peptide.

This sequence belongs to the thaumatin family.

This chain is Pathogenesis-related protein 1C, found in Hordeum vulgare (Barley).